The sequence spans 266 residues: Protein crossbronx-like (266 aa).

In terms of domain architecture, UBC core spans 15 to 178 (KQGYKILAEY…IQELAISSRR (164 aa)). The interval 216-266 (EATCEDDSPPAELLGHIDSSRQLDEDEANQRGKLQAATTDLQHGARCSVAQ) is disordered.

The protein belongs to the ubiquitin-conjugating enzyme family. FTS subfamily.

The protein is Protein crossbronx-like of Drosophila ananassae (Fruit fly).